The sequence spans 435 residues: MSEFRQATDAFASNPVESKQEIRNYTMNFGPQHPAAHGVLRLILEMDGETVVRADPHIGLLHRGTEKLAESKPFNQSVPYMDRLDYVSMMCNEHAYVRAIESLMGIEAPERAQYIRTMFDEITRIKNHLMWVGSNALDLGAMAVMLYAFREREELMDVYEAVSGARMHAAYYRPGGVYRDLPDRMPQYKESRWHKGGALKKRNAGREGTMLDFLEEFTNTFPARVDEYETLLTDNRIWKQRTVDVGIISPDLARAWGMTGPMLRGSGIEWDLRKKQPYAKYDAVDFDIPVGTNGDCYDRYLVRVAEMRESNRIIKQCVKWLKANPGPVMVTNFKVAPPSREGMKDDMEALIHHFKLFSEGYCVPAGETYSAVEAPKGEFGCYLMSDGANKPFRVHLRAPGFAHLSSMDAVVRGYLLADVVAMIGTYDLVFGEVDR.

Belongs to the complex I 49 kDa subunit family. In terms of assembly, NDH-1 is composed of 14 different subunits. Subunits NuoB, C, D, E, F, and G constitute the peripheral sector of the complex.

It localises to the cell inner membrane. It catalyses the reaction a quinone + NADH + 5 H(+)(in) = a quinol + NAD(+) + 4 H(+)(out). In terms of biological role, NDH-1 shuttles electrons from NADH, via FMN and iron-sulfur (Fe-S) centers, to quinones in the respiratory chain. The immediate electron acceptor for the enzyme in this species is believed to be ubiquinone. Couples the redox reaction to proton translocation (for every two electrons transferred, four hydrogen ions are translocated across the cytoplasmic membrane), and thus conserves the redox energy in a proton gradient. The sequence is that of NADH-quinone oxidoreductase subunit D from Xanthomonas euvesicatoria pv. vesicatoria (strain 85-10) (Xanthomonas campestris pv. vesicatoria).